Consider the following 104-residue polypeptide: L-rhamnose mutarotase (104 aa).

Y18 contributes to the substrate binding site. H22 functions as the Proton donor in the catalytic mechanism. Substrate is bound by residues Y41 and 76–77 (WW).

The protein belongs to the rhamnose mutarotase family. As to quaternary structure, homodimer.

Its subcellular location is the cytoplasm. The enzyme catalyses alpha-L-rhamnose = beta-L-rhamnose. Its pathway is carbohydrate metabolism; L-rhamnose metabolism. In terms of biological role, involved in the anomeric conversion of L-rhamnose. This Salmonella arizonae (strain ATCC BAA-731 / CDC346-86 / RSK2980) protein is L-rhamnose mutarotase.